A 215-amino-acid chain; its full sequence is Pyrrolidone-carboxylate peptidase (215 aa).

Catalysis depends on residues Glu80, Cys143, and His167.

The protein belongs to the peptidase C15 family. In terms of assembly, homotetramer.

Its subcellular location is the cytoplasm. The catalysed reaction is Release of an N-terminal pyroglutamyl group from a polypeptide, the second amino acid generally not being Pro.. In terms of biological role, removes 5-oxoproline from various penultimate amino acid residues except L-proline. The chain is Pyrrolidone-carboxylate peptidase from Bacillus thuringiensis (strain Al Hakam).